Here is a 479-residue protein sequence, read N- to C-terminus: Probable periplasmic serine endoprotease DegP-like (479 aa).

Residues 1–27 (MSIPRLKSYLSMFAAVLMLGQVLSAQA) form the signal peptide. Active-site charge relay system residues include H117, D147, and S220. Substrate-binding positions include 218 to 220 (GNS) and 275 to 279 (LGVVI). PDZ domains follow at residues 264–355 (LKKD…IRNG) and 361–468 (DVTI…LRQG). Residues 368–395 (PDDDADIGTGTGADGSAERSSNRLGVSV) form a disordered region.

The protein belongs to the peptidase S1C family.

It localises to the periplasm. The enzyme catalyses Acts on substrates that are at least partially unfolded. The cleavage site P1 residue is normally between a pair of hydrophobic residues, such as Val-|-Val.. Functionally, might be efficient in the degradation of transiently denatured and unfolded proteins which accumulate in the periplasm following stress conditions. This is Probable periplasmic serine endoprotease DegP-like from Pseudomonas putida (strain W619).